The following is a 52-amino-acid chain: uncharacterized protein (52 aa).

The interval 1 to 52 (MSLRPCLTPSSMQYSDIYIPTPTPTHHTHTPTPHPHPHTHTHTHHNPNPTLF) is disordered. The span at 35 to 45 (PHPHTHTHTHH) shows a compositional bias: basic residues.

This is an uncharacterized protein from Saccharomyces cerevisiae (strain ATCC 204508 / S288c) (Baker's yeast).